Reading from the N-terminus, the 853-residue chain is Lysine-specific histone demethylase 1A (853 aa).

Residues 1–177 (MLSGKKAAAA…EPEEPSGVEG (177 aa)) are disordered. Positions 7-26 (AAAAAAAAAAAAAAGTEAGS) are enriched in low complexity. At Thr-60 the chain carries Phosphothreonine. Residues 76–97 (AEPPGSAGPQAGPTAGPGSATP) are compositionally biased toward low complexity. Residue Thr-105 is modified to Phosphothreonine. The stretch at 111 to 152 (TSRRKRAKVEYREMDESLANLSEDEYYSEEERNAKAEKEKKL) forms a coiled coil. Phosphoserine is present on residues Ser-127 and Ser-132. Tyr-136 is subject to Phosphotyrosine. Ser-138 is modified (phosphoserine). Basic and acidic residues predominate over residues 139–152 (EEERNAKAEKEKKL). Residues 161-173 (PEEENESEPEEPS) are compositionally biased toward acidic residues. The residue at position 167 (Ser-167) is a Phosphoserine. One can recognise an SWIRM domain in the interval 175-274 (VEGAAFQSRL…FGIYKRIKPL (100 aa)). Residues Ser-290, Glu-309, Arg-311, Arg-317, and 333-334 (MV) contribute to the FAD site. The tract at residues 301–853 (FGMDVTLLEA…GVPAQQSPSM (553 aa)) is demethylase activity. A coiled-coil region spans residues 429-515 (IEHWKKIVKT…EEKLQELEAN (87 aa)). Residues Lys-433, Lys-434, and Lys-437 each carry the N6-acetyllysine modification. Glycyl lysine isopeptide (Lys-Gly) (interchain with G-Cter in SUMO2) cross-links involve residues Lys-443 and Lys-470. A Glycyl lysine isopeptide (Lys-Gly) (interchain with G-Cter in ubiquitin) cross-link involves residue Lys-504. Phosphoserine is present on Ser-612. Residues Glu-802 and 811–812 (TV) each bind FAD. The residue at position 850 (Ser-850) is a Phosphoserine.

The protein belongs to the flavin monoamine oxidase family. In terms of assembly, component of a histone demethylase complex with RCOR1. Component of a BHC histone deacetylase complex that contains HDAC1, HDAC2, HMG20B, KDM1A, RCOR1 and PHF21A. The BHC complex may also contain ZMYM2, ZNF217, ZMYM3, GSE1 and GTF2I. In the complex, RCOR1 strongly enhances the demethylase activity and protects it from the proteasome while PHF21A inhibits the demethylase activity. Interacts with the androgen receptor (AR). Component of a RCOR/GFI/KDM1A/HDAC complex. Interacts directly with GFI1 and GFI1B. Interacts with SNAI1 (via SNAG domain). Interacts with INSM1. Interacts (via AOD/Tower domain) with JADE2 (via C-terminus). Interacts with ESRRB; co-occupes the core set of ESRRB targets. Interacts with SAMD1 (via WH domain); the interaction modulates KDM1A function. Interacts with RBPJ. Interacts with L3MBTL3. Interacts with ZMYND8. FAD is required as a cofactor. Acetylated by KAT8 in epithelial but not in mesenchymal cells, thereby regulating the epithelial-to-mesenchymal transition. Acetylation by KAT8 reduces KDM1A association with nucleosomes, thereby decreasing histone H3 demethylation, leading to transcription activatio of target genes. Post-translationally, polyubiquitinated by JADE2; which leads to its proteasomal degradation. Deubiquitinated by USP38; preventing it from degradation by the 26S proteasome. Ubiquitously expressed.

The protein resides in the nucleus. The protein localises to the chromosome. The catalysed reaction is N(6),N(6)-dimethyl-L-lysyl(4)-[histone H3] + 2 A + 2 H2O = L-lysyl(4)-[histone H3] + 2 formaldehyde + 2 AH2. With respect to regulation, the N-terminal sequences of INSM1 and SNAI1 compete with histone H3 for the same binding site and thereby inhibit histone demethylation (in vitro). In terms of biological role, histone demethylase that can demethylate both 'Lys-4' (H3K4me) and 'Lys-9' (H3K9me) of histone H3, thereby acting as a coactivator or a corepressor, depending on the context. Acts by oxidizing the substrate by FAD to generate the corresponding imine that is subsequently hydrolyzed. Acts as a corepressor by mediating demethylation of H3K4me, a specific tag for epigenetic transcriptional activation. Demethylates both mono- (H3K4me1) and di-methylated (H3K4me2) H3K4me. May play a role in the repression of neuronal genes. Alone, it is unable to demethylate H3K4me on nucleosomes and requires the presence of RCOR1/CoREST to achieve such activity. Also acts as a coactivator of androgen receptor (ANDR)-dependent transcription, by being recruited to ANDR target genes and mediating demethylation of H3K9me, a specific tag for epigenetic transcriptional repression. The presence of PRKCB in ANDR-containing complexes, which mediates phosphorylation of 'Thr-6' of histone H3 (H3T6ph), a specific tag that prevents demethylation H3K4me, prevents H3K4me demethylase activity of KDM1A. Demethylates di-methylated 'Lys-370' of p53/TP53 which prevents interaction of p53/TP53 with TP53BP1 and represses p53/TP53-mediated transcriptional activation. Demethylates and stabilizes the DNA methylase DNMT1. Demethylates methylated 'Lys-44' and methylated 'Lys-119' of SOX2. Required for gastrulation during embryogenesis. Component of a RCOR/GFI/KDM1A/HDAC complex that suppresses, via histone deacetylase (HDAC) recruitment, a number of genes implicated in multilineage blood cell development. Facilitates epithelial-to-mesenchymal transition by acting as an effector of SNAI1-mediated transcription repression of epithelial markers E-cadherin/CDH1, CDN7 and KRT8. Required for the maintenance of the silenced state of the SNAI1 target genes E-cadherin/CDH1 and CDN7. Required for the repression of GIPR expression. The protein is Lysine-specific histone demethylase 1A of Mus musculus (Mouse).